Consider the following 232-residue polypeptide: Large ribosomal subunit protein uL1 (232 aa).

It belongs to the universal ribosomal protein uL1 family. In terms of assembly, part of the 50S ribosomal subunit.

Its function is as follows. Binds directly to 23S rRNA. The L1 stalk is quite mobile in the ribosome, and is involved in E site tRNA release. Functionally, protein L1 is also a translational repressor protein, it controls the translation of the L11 operon by binding to its mRNA. In Rhizobium rhizogenes (strain K84 / ATCC BAA-868) (Agrobacterium radiobacter), this protein is Large ribosomal subunit protein uL1.